We begin with the raw amino-acid sequence, 539 residues long: 2,3-bisphosphoglycerate-independent phosphoglycerate mutase (539 aa).

Residues Asp37 and Ser86 each contribute to the Mn(2+) site. The active site involves Ser86. Substrate contacts are provided by residues His147, 177 to 178 (RD), Arg210, Arg216, 284 to 287 (RADR), and Lys359. The Mn(2+) site is built by Asp426, His430, Asp467, His468, and His485.

It belongs to the BPG-independent phosphoglycerate mutase family. Mg(2+) is required as a cofactor. Requires Mn(2+) as cofactor. As to expression, expressed ubiquitously. High expression levels in the nerve ring region, intestine and body wall muscles.

It carries out the reaction (2R)-2-phosphoglycerate = (2R)-3-phosphoglycerate. It functions in the pathway carbohydrate degradation; glycolysis; pyruvate from D-glyceraldehyde 3-phosphate: step 3/5. Activity is not affected by 2,3-bisphosphoglycerate. Catalyzes the interconversion of 2-phosphoglycerate and 3-phosphoglycerate. The chain is 2,3-bisphosphoglycerate-independent phosphoglycerate mutase from Caenorhabditis elegans.